A 168-amino-acid chain; its full sequence is MNPFDIRIGQGYDVHALVPGRKLILGGVDIPHDRGLLGHSDADALLHAVTDALFGAAALGDIGRHFPDTDPNFAGADSRVLLREAVRRVREAGYEIGNVDATVIAQKPKLAPHISGMVANLAEDLGLPVTRCNVKAKTNEKLGFEGKEEGIVAQAAVLIYRRNGDAQD.

Residues Asp-13 and His-15 each contribute to the a divalent metal cation site. Residues 13 to 15 (DVH) and 39 to 40 (HS) each bind 4-CDP-2-C-methyl-D-erythritol 2-phosphate. An a divalent metal cation-binding site is contributed by His-47. 4-CDP-2-C-methyl-D-erythritol 2-phosphate is bound by residues 61–63 (DIG), 66–70 (FPDTD), Phe-144, and Lys-147.

Belongs to the IspF family. In terms of assembly, homotrimer. It depends on a divalent metal cation as a cofactor.

It catalyses the reaction 4-CDP-2-C-methyl-D-erythritol 2-phosphate = 2-C-methyl-D-erythritol 2,4-cyclic diphosphate + CMP. The protein operates within isoprenoid biosynthesis; isopentenyl diphosphate biosynthesis via DXP pathway; isopentenyl diphosphate from 1-deoxy-D-xylulose 5-phosphate: step 4/6. Functionally, involved in the biosynthesis of isopentenyl diphosphate (IPP) and dimethylallyl diphosphate (DMAPP), two major building blocks of isoprenoid compounds. Catalyzes the conversion of 4-diphosphocytidyl-2-C-methyl-D-erythritol 2-phosphate (CDP-ME2P) to 2-C-methyl-D-erythritol 2,4-cyclodiphosphate (ME-CPP) with a corresponding release of cytidine 5-monophosphate (CMP). This Cupriavidus metallidurans (strain ATCC 43123 / DSM 2839 / NBRC 102507 / CH34) (Ralstonia metallidurans) protein is 2-C-methyl-D-erythritol 2,4-cyclodiphosphate synthase.